The chain runs to 700 residues: Putative glutamine-dependent NAD(+) synthetase (700 aa).

The region spanning 5 to 275 (VTIASCQLNQ…VEVISATVDV (271 aa)) is the CN hydrolase domain. The Proton acceptor; for glutaminase activity role is filled by E45. The active-site For glutaminase activity is K114. C175 acts as the Nucleophile; for glutaminase activity in catalysis. Positions 327-700 (IPLPEEEITF…ASKFEQHQRK (374 aa)) are ligase. 357–364 (PLSGGLDS) contacts ATP. S359 is a catalytic residue.

This sequence in the C-terminal section; belongs to the NAD synthetase family.

The enzyme catalyses deamido-NAD(+) + L-glutamine + ATP + H2O = L-glutamate + AMP + diphosphate + NAD(+) + H(+). Its pathway is cofactor biosynthesis; NAD(+) biosynthesis; NAD(+) from deamido-NAD(+) (L-Gln route): step 1/1. The polypeptide is Putative glutamine-dependent NAD(+) synthetase (Schizosaccharomyces pombe (strain 972 / ATCC 24843) (Fission yeast)).